A 385-amino-acid polypeptide reads, in one-letter code: Cell division protein FtsZ (385 aa).

Residues 37–41 (GGGSN), 125–127 (GTG), E156, K160, and D204 contribute to the GTP site.

This sequence belongs to the FtsZ family. In terms of assembly, homodimer. Polymerizes to form a dynamic ring structure in a strictly GTP-dependent manner. Interacts directly with several other division proteins.

The protein localises to the cytoplasm. In terms of biological role, essential cell division protein that forms a contractile ring structure (Z ring) at the future cell division site. The regulation of the ring assembly controls the timing and the location of cell division. One of the functions of the FtsZ ring is to recruit other cell division proteins to the septum to produce a new cell wall between the dividing cells. Binds GTP and shows GTPase activity. The chain is Cell division protein FtsZ from Helicobacter pylori (strain ATCC 700392 / 26695) (Campylobacter pylori).